The following is a 283-amino-acid chain: Bis(5'-nucleosyl)-tetraphosphatase, symmetrical (283 aa).

This sequence belongs to the Ap4A hydrolase family.

It carries out the reaction P(1),P(4)-bis(5'-adenosyl) tetraphosphate + H2O = 2 ADP + 2 H(+). Its function is as follows. Hydrolyzes diadenosine 5',5'''-P1,P4-tetraphosphate to yield ADP. In Cronobacter sakazakii (strain ATCC BAA-894) (Enterobacter sakazakii), this protein is Bis(5'-nucleosyl)-tetraphosphatase, symmetrical.